The following is a 1397-amino-acid chain: DNA-directed RNA polymerase subunit beta' (1397 aa).

Zn(2+)-binding residues include C75, C77, C90, and C93. Mg(2+) contacts are provided by D465, D467, and D469. Residues C819, C893, C900, and C903 each coordinate Zn(2+).

It belongs to the RNA polymerase beta' chain family. In terms of assembly, the RNAP catalytic core consists of 2 alpha, 1 beta, 1 beta' and 1 omega subunit. When a sigma factor is associated with the core the holoenzyme is formed, which can initiate transcription. Mg(2+) is required as a cofactor. Zn(2+) serves as cofactor.

The catalysed reaction is RNA(n) + a ribonucleoside 5'-triphosphate = RNA(n+1) + diphosphate. In terms of biological role, DNA-dependent RNA polymerase catalyzes the transcription of DNA into RNA using the four ribonucleoside triphosphates as substrates. The protein is DNA-directed RNA polymerase subunit beta' of Acinetobacter baumannii (strain ACICU).